The chain runs to 193 residues: 7-methyl-GTP pyrophosphatase (193 aa).

D68 (proton acceptor) is an active-site residue.

The protein belongs to the Maf family. YceF subfamily. It depends on a divalent metal cation as a cofactor.

Its subcellular location is the cytoplasm. It catalyses the reaction N(7)-methyl-GTP + H2O = N(7)-methyl-GMP + diphosphate + H(+). In terms of biological role, nucleoside triphosphate pyrophosphatase that hydrolyzes 7-methyl-GTP (m(7)GTP). May have a dual role in cell division arrest and in preventing the incorporation of modified nucleotides into cellular nucleic acids. This chain is 7-methyl-GTP pyrophosphatase, found in Chromobacterium violaceum (strain ATCC 12472 / DSM 30191 / JCM 1249 / CCUG 213 / NBRC 12614 / NCIMB 9131 / NCTC 9757 / MK).